Consider the following 1159-residue polypeptide: Anillin-like protein 1 (1159 aa).

Disordered stretches follow at residues 43 to 81, 266 to 327, 409 to 430, 549 to 608, and 629 to 699; these read VASPTKVFGSSSKCNDGPSTPVHFHPQEPKETTPNMKEN, QQVS…TKTT, KLKKSSSANVTAPPAPTSAPVP, AIPK…GDVI, and FGFM…KSSS. The span at 50–60 shows a compositional bias: polar residues; sequence FGSSSKCNDGP. Residues 287–327 show a composition bias toward low complexity; that stretch reads ASSATSSSSSTTTLTTISGASGSTTSGISNAPQDSASTKTT. The segment covering 421–430 has biased composition (pro residues); the sequence is PPAPTSAPVP. Residues 564-584 show a composition bias toward polar residues; sequence SASSLYSQGARSNTASPASKS. Residues 660–684 show a composition bias toward acidic residues; it reads VIEEETENEDESEPYEPEEEEDDDA. Residues 1029 to 1147 enclose the PH domain; it reads DITYHGFLSM…WLSLINSTSK (119 aa).

Strongly expressed in dividing neuroblasts under the ventral epidermal cells during ventral enclosure.

It is found in the cytoplasm. The protein localises to the cell cortex. Its subcellular location is the cytoskeleton. It localises to the spindle. The protein resides in the midbody. It is found in the cleavage furrow. Required for contractile events in embryos that occur prior to mitosis, such as cortical ruffling and pseudocleavage. Promotes membrane ruffling by organizing cortical patches of septins and myosin II. Not generally required for cytokinesis in mitotic cells. Required for the asymmetric cleavage events that extrude the two polar bodies during oocyte meiosis. Not required for meiotic contractile ring assembly, initiation or closure but is required for the transformation of the contractile ring from a disk above the spindle to a tube around the spindle midzone. Promotes astral microtubule-directed cortical myosin polarization and cleavage furrow ingression. Regulates neuroblast cytokinesis during mid- to late-embryogenesis and is required for ventral enclosure. In Caenorhabditis elegans, this protein is Anillin-like protein 1 (ani-1).